The sequence spans 170 residues: Urease accessory protein UreE (170 aa).

The segment at 137-170 (PFDPESGAYAHAGREQSHAHSHEHSHADGHTHAH) is disordered. A compositionally biased stretch (basic and acidic residues) spans 148-170 (AGREQSHAHSHEHSHADGHTHAH).

This sequence belongs to the UreE family.

The protein localises to the cytoplasm. Its function is as follows. Involved in urease metallocenter assembly. Binds nickel. Probably functions as a nickel donor during metallocenter assembly. This chain is Urease accessory protein UreE, found in Pseudoalteromonas translucida (strain TAC 125).